The sequence spans 457 residues: Serine--tRNA ligase (457 aa).

252–254 provides a ligand contact to L-serine; it reads TAE. ATP is bound by residues 283–285 and valine 299; that span reads RKE. An L-serine-binding site is contributed by glutamate 306. Residue 370-373 participates in ATP binding; it reads EMVS. Threonine 406 contacts L-serine.

It belongs to the class-II aminoacyl-tRNA synthetase family. Type-1 seryl-tRNA synthetase subfamily. In terms of assembly, homodimer. The tRNA molecule binds across the dimer.

It is found in the cytoplasm. The catalysed reaction is tRNA(Ser) + L-serine + ATP = L-seryl-tRNA(Ser) + AMP + diphosphate + H(+). It carries out the reaction tRNA(Sec) + L-serine + ATP = L-seryl-tRNA(Sec) + AMP + diphosphate + H(+). It functions in the pathway aminoacyl-tRNA biosynthesis; selenocysteinyl-tRNA(Sec) biosynthesis; L-seryl-tRNA(Sec) from L-serine and tRNA(Sec): step 1/1. Functionally, catalyzes the attachment of serine to tRNA(Ser). Is also able to aminoacylate tRNA(Sec) with serine, to form the misacylated tRNA L-seryl-tRNA(Sec), which will be further converted into selenocysteinyl-tRNA(Sec). This chain is Serine--tRNA ligase, found in Saccharolobus islandicus (strain M.14.25 / Kamchatka #1) (Sulfolobus islandicus).